A 144-amino-acid polypeptide reads, in one-letter code: Large ribosomal subunit protein uL15 (144 aa).

Positions 1 to 48 (MQLNNLKPAAGSKHAKRRVGRGIGSGLGKTAGRGHKGQKSRSGGFHKV) are disordered. A compositionally biased stretch (gly residues) spans 21–31 (RGIGSGLGKTA).

This sequence belongs to the universal ribosomal protein uL15 family. Part of the 50S ribosomal subunit.

In terms of biological role, binds to the 23S rRNA. This Cupriavidus taiwanensis (strain DSM 17343 / BCRC 17206 / CCUG 44338 / CIP 107171 / LMG 19424 / R1) (Ralstonia taiwanensis (strain LMG 19424)) protein is Large ribosomal subunit protein uL15.